The primary structure comprises 196 residues: Small ribosomal subunit protein uS4c (196 aa).

The disordered stretch occupies residues G16–F36. The S4 RNA-binding domain occupies M89–L169.

Belongs to the universal ribosomal protein uS4 family. In terms of assembly, part of the 30S ribosomal subunit. Contacts protein S5. The interaction surface between S4 and S5 is involved in control of translational fidelity.

The protein resides in the plastid. Its subcellular location is the chloroplast. In terms of biological role, one of the primary rRNA binding proteins, it binds directly to 16S rRNA where it nucleates assembly of the body of the 30S subunit. Functionally, with S5 and S12 plays an important role in translational accuracy. The chain is Small ribosomal subunit protein uS4c (rps4) from Cinna latifolia (Drooping woodreed).